Consider the following 213-residue polypeptide: 3-isopropylmalate dehydratase small subunit (213 aa).

Belongs to the LeuD family. LeuD type 1 subfamily. Heterodimer of LeuC and LeuD.

The catalysed reaction is (2R,3S)-3-isopropylmalate = (2S)-2-isopropylmalate. It participates in amino-acid biosynthesis; L-leucine biosynthesis; L-leucine from 3-methyl-2-oxobutanoate: step 2/4. Its function is as follows. Catalyzes the isomerization between 2-isopropylmalate and 3-isopropylmalate, via the formation of 2-isopropylmaleate. This Pseudomonas syringae pv. syringae (strain B728a) protein is 3-isopropylmalate dehydratase small subunit.